A 402-amino-acid polypeptide reads, in one-letter code: NADH-quinone oxidoreductase subunit D (402 aa).

This sequence belongs to the complex I 49 kDa subunit family. In terms of assembly, NDH-1 is composed of 14 different subunits. Subunits NuoB, C, D, E, F, and G constitute the peripheral sector of the complex.

It is found in the cell inner membrane. The enzyme catalyses a quinone + NADH + 5 H(+)(in) = a quinol + NAD(+) + 4 H(+)(out). Its function is as follows. NDH-1 shuttles electrons from NADH, via FMN and iron-sulfur (Fe-S) centers, to quinones in the respiratory chain. The immediate electron acceptor for the enzyme in this species is believed to be ubiquinone. Couples the redox reaction to proton translocation (for every two electrons transferred, four hydrogen ions are translocated across the cytoplasmic membrane), and thus conserves the redox energy in a proton gradient. The chain is NADH-quinone oxidoreductase subunit D from Maricaulis maris (strain MCS10) (Caulobacter maris).